A 269-amino-acid chain; its full sequence is Thyroxine 5-deiodinase (269 aa).

Residues 1 to 14 lie on the Cytoplasmic side of the membrane; the sequence is MLPAPHTCCRLLQQ. A helical; Signal-anchor for type II membrane protein membrane pass occupies residues 15 to 35; that stretch reads LLACCLLLPRFLLTVLLLWLL. At 36–269 the chain is on the extracellular side; sequence DFPCVRRRVI…TGNGALVIQV (234 aa). U133 is an active-site residue. Residue U133 is a non-standard amino acid, selenocysteine.

The protein belongs to the iodothyronine deiodinase family. As to quaternary structure, monomer. Homodimer. May undergo minor heretodimerization with DIO1 and DIO2.

The protein localises to the cell membrane. It is found in the endosome membrane. The enzyme catalyses 3,3',5'-triiodo-L-thyronine + iodide + A + H(+) = L-thyroxine + AH2. It carries out the reaction 3,3'-diiodo-L-thyronine + iodide + A + H(+) = 3,3',5-triiodo-L-thyronine + AH2. The catalysed reaction is 3-iodo-L-thyronine + iodide + A + H(+) = 3,5-diiodo-L-thyronine + AH2. It catalyses the reaction L-thyronine + iodide + A + H(+) = 3-iodo-L-thyronine + AH2. The enzyme catalyses 3',5'-diiodo-L-thyronine + iodide + A + H(+) = 3,3',5'-triiodo-L-thyronine + AH2. It carries out the reaction 3'-iodo-L-thyronine + iodide + A + H(+) = 3,3'-diiodo-L-thyronine + AH2. The catalysed reaction is 3,3',5'-triiodothyronamine + iodide + A + H(+) = 3,3',5,5'-tetraiodothyronamine + AH2. It catalyses the reaction 3',5'-diiodothyronamine + iodide + A + H(+) = 3,3',5'-triiodothyronamine + AH2. The enzyme catalyses 3,3'-diiodothyronamine + iodide + A + H(+) = 3,3',5-triiodothyronamine + AH2. It carries out the reaction 3-iodothyronamine + iodide + A + H(+) = 3,5-diiodothyronamine + AH2. The catalysed reaction is 3'-iodothyronamine + iodide + A + H(+) = 3,3'-diiodothyronamine + AH2. It catalyses the reaction thyronamine + iodide + A + H(+) = 3-iodothyronamine + AH2. Its function is as follows. Plays a crucial role in the metabolism of thyroid hormones (TH) and has specific roles in TH activation and inactivation by deiodination. Catalyzes the deiodination of L-thyroxine (T4) to 3,3',5'-triiodothyronine (rT3), 3,5-diiodothyronine (3,5-T2) to 3-monoiodothyronine (3-T1), rT3 to 3',5'-diiodothyronine (3',5'-T2) and 3,3'-diiodothyronine (3,3'-T2) to 3'-monoiodothyronine (3'-T1) via inner-ring deiodination (IRD). Catalyzes the deiodination of 3,5,3'-triiodothyronine (T3) to 3,3'-diiodothyronine (3,3'-T2) via IRD. Catalyzes the deiodination of 3-T1 to L-thyronine (T0) via outer-ring deiodination (ORD). Catalyzes the tyrosyl ring deiodinations of 3,3',5,5'-tetraiodothyronamine, 3,3',5'-triiodothyronamine, 3,5,3'-triiodothyronamine, 3,5-diiodothyronamine, 3,3'-diiodothyronamine and 3-iodothyronamine. The sequence is that of Thyroxine 5-deiodinase (dio3) from Aquarana catesbeiana (American bullfrog).